Here is a 1231-residue protein sequence, read N- to C-terminus: Complement factor H (1231 aa).

Residues 1–18 (MRLLAKIICLMLWAICVA) form the signal peptide. 20 Sushi domains span residues 19–82 (EDCN…KCQK), 83–143 (RPCG…ICEV), 144–207 (VKCL…KCVE), 208–264 (ISCK…SCEE), 265–322 (KSCD…RCTL), 324–386 (PCDY…VPCL), 387–444 (RKCY…RCIR), 446–507 (KTCS…TCIK), 515–566 (MNAR…ICYE), 567–625 (RECE…ICKE), 628–686 (QSCG…VCIV), 689–746 (STCG…QCVA), 751–805 (KKCK…NCSM), 809–866 (QLCP…LCVE), 868–928 (IPCS…QCEG), 929–986 (LPCK…SCIK), 987–1045 (TDCL…TCRD), 1046–1104 (TSCV…QCKD), 1107–1165 (GKCG…KCLH), and 1170–1230 (SREI…TCAK). 40 cysteine pairs are disulfide-bonded: cysteine 21–cysteine 66, cysteine 52–cysteine 80, cysteine 85–cysteine 129, cysteine 114–cysteine 141, cysteine 146–cysteine 192, cysteine 178–cysteine 205, cysteine 210–cysteine 251, cysteine 237–cysteine 262, cysteine 267–cysteine 309, cysteine 294–cysteine 320, cysteine 325–cysteine 374, cysteine 357–cysteine 385, cysteine 389–cysteine 431, cysteine 416–cysteine 442, cysteine 448–cysteine 494, cysteine 477–cysteine 505, cysteine 509–cysteine 553, cysteine 536–cysteine 564, cysteine 569–cysteine 611, cysteine 597–cysteine 623, cysteine 630–cysteine 673, cysteine 659–cysteine 684, cysteine 691–cysteine 733, cysteine 719–cysteine 744, cysteine 753–cysteine 792, cysteine 781–cysteine 803, cysteine 811–cysteine 853, cysteine 839–cysteine 864, cysteine 870–cysteine 915, cysteine 901–cysteine 926, cysteine 931–cysteine 973, cysteine 959–cysteine 984, cysteine 989–cysteine 1032, cysteine 1018–cysteine 1043, cysteine 1048–cysteine 1091, cysteine 1077–cysteine 1102, cysteine 1109–cysteine 1152, cysteine 1138–cysteine 1163, cysteine 1167–cysteine 1218, and cysteine 1201–cysteine 1228. Asparagine 217 carries N-linked (GlcNAc...) (complex) asparagine glycosylation. Residue asparagine 529 is glycosylated (N-linked (GlcNAc...) asparagine). Asparagine 718 is a glycosylation site (N-linked (GlcNAc...) asparagine). 2 N-linked (GlcNAc...) asparagine glycosylation sites follow: asparagine 802 and asparagine 822. 2 N-linked (GlcNAc...) (complex) asparagine glycosylation sites follow: asparagine 882 and asparagine 911. Asparagine 1029 carries an N-linked (GlcNAc...) (complex) asparagine glycan. An N-linked (GlcNAc...) asparagine glycan is attached at asparagine 1095.

As to quaternary structure, homodimer. Also forms homooligomers. Interacts with complement protein C3b; this interaction inhibits complement activation. Interacts with complement protein C3d. Interacts with CR3/ITGAM; this interaction mediates adhesion of neutrophils to pathogens leading to pathogen clearance. Interacts with complement factor I. (Microbial infection) Interacts with West nile virus non-structural protein 1 (NS1); this interaction leads to the degradation of C3. In terms of assembly, (Microbial infection) Interacts with C.albicans GPD2; the interaction is direct and leads to the degradation of C3 which enables the pathogen to evade the host innate immune system. As to quaternary structure, (Microbial infection) Interacts with Neisseria meningitidis protein fHbp. (Microbial infection) Interacts with Borrelia burgdorferi outer surface protein E/OspE; this interaction recruits complement regulator factor H onto the bacterial surface to evade complement-mediated cell lysis. In terms of assembly, (Microbial infection) Interacts with Streptococcus pneumoniae protein virulence factor choline-binding protein A/CbpAN; this interaction enables Streptococcus pneumoniae to evade surveillance by human complement system. As to quaternary structure, (Microbial infection) Interacts with Staphylococcus aureus surface protein serine-aspartate repeat protein E/SdrE; this interaction sequesters CFH on the surface of S.aureus for complement evasion. (Microbial infection) Interacts with Staphylococcus aureus protein Sbi; this interaction inhibits the complement activation of the alternative pathway. In terms of assembly, (Microbial infection) Interacts (via sushi 4-6 domains) with P.falciparum surface protein PF92; the interaction recruits CFH onto the merozoite surface preventing complement-mediated cell lysis. The interaction does not affect CFH activity. Interacts (via sushi 6-7 domains) with P.falciparum (strain NF54) GAP50; the interaction occurs in the vector mosquito midgut at the surface of the activated parasite gametocytes; the interaction protects the parasite from alternative complement pathway-mediated elimination. As to quaternary structure, (Microbial infection) Interacts (via sushi 4-6 domains) with P.falciparum surface protein PF92; the interaction recruits FHL-1 isoform onto the merozoite surface preventing complement-mediated cell lysis. The interaction does not affect FHL-1 isoform activity. Interacts (via sushi 6-7 domains) with P.falciparum (strain NF54) GAP50; the interaction occurs in the vector mosquito midgut at the surface of the activated parasite gametocytes; the interaction protects the parasite from alternative complement pathway-mediated elimination. In terms of processing, sulfated on tyrosine residues. According to a report, Asn-217 is not glycosylated. Another study observed glycosylation at this position. In terms of tissue distribution, expressed in the retinal pigment epithelium (at protein level). CFH is one of the most abundant complement components in blood where the liver is the major source of CFH protein in vivo. in addition, CFH is secreted by additional cell types including monocytes, fibroblasts, or endothelial cells.

The protein localises to the secreted. Its function is as follows. Glycoprotein that plays an essential role in maintaining a well-balanced immune response by modulating complement activation. Acts as a soluble inhibitor of complement, where its binding to self markers such as glycan structures prevents complement activation and amplification on cell surfaces. Accelerates the decay of the complement alternative pathway (AP) C3 convertase C3bBb, thus preventing local formation of more C3b, the central player of the complement amplification loop. As a cofactor of the serine protease factor I, CFH also regulates proteolytic degradation of already-deposited C3b. In addition, mediates several cellular responses through interaction with specific receptors. For example, interacts with CR3/ITGAM receptor and thereby mediates the adhesion of human neutrophils to different pathogens. In turn, these pathogens are phagocytosed and destroyed. Functionally, (Microbial infection) In the mosquito midgut, binds to the surface of parasite P.falciparum gametocytes and protects the parasite from alternative complement pathway-mediated elimination. In Homo sapiens (Human), this protein is Complement factor H (CFH).